We begin with the raw amino-acid sequence, 391 residues long: Multidrug resistance protein MdtL (391 aa).

The next 12 helical transmembrane spans lie at 4–24 (FLICSFALVLLYPAGIDMYLV), 42–62 (IAFSVYLAGMAAAMLFAGKVA), 69–89 (PVAIPGAALFIIASVFCSLAE), 93–113 (LFLAGRFLQGLGAGCCYVVAF), 131–151 (LLNGITCIIPVLAPVLGHLIM), 158–178 (SLFWTMAMMGIAVLMLSLFIL), 203–222 (FFLSRVVITTLSVSVILTFV), 245–265 (ALTAGVSMTVSFSTPFALGIF), 269–289 (TLMITSQVLFLAAGITLAVSP), 293–313 (VSLFGITLICAGFSVGFGVAM), 331–351 (LGIAQVCGSSLWIWLAAVVGI), and 356–376 (MLIGILIACSIVSLLLIMFVA).

This sequence belongs to the major facilitator superfamily. DHA1 family. MdtL (TC 2.A.1.2.22) subfamily.

The protein resides in the cell inner membrane. Confers resistance to chloramphenicol. This Escherichia coli O139:H28 (strain E24377A / ETEC) protein is Multidrug resistance protein MdtL.